The sequence spans 399 residues: Flavohemoprotein (399 aa).

The 138-residue stretch at Met1 to Lys138 folds into the Globin domain. Position 22 is a phosphothreonine (Thr22). His85 is a binding site for heme b. Residues Tyr95 and Glu137 each act as charge relay system in the active site. The segment at Trp146–Val399 is reductase. The region spanning Pro147–Asn264 is the FAD-binding FR-type domain. FAD contacts are provided by residues Tyr189 and Arg207 to Ser210. Gly281–Pro286 is a binding site for NADP(+). Pro389–Pro392 is a binding site for FAD.

The protein belongs to the globin family. Two-domain flavohemoproteins subfamily. This sequence in the C-terminal section; belongs to the flavoprotein pyridine nucleotide cytochrome reductase family. Requires FAD as cofactor. The cofactor is heme b.

It is found in the cytoplasm. It carries out the reaction 2 nitric oxide + NADPH + 2 O2 = 2 nitrate + NADP(+) + H(+). The catalysed reaction is 2 nitric oxide + NADH + 2 O2 = 2 nitrate + NAD(+) + H(+). Its function is as follows. Is involved in NO detoxification in an aerobic process, termed nitric oxide dioxygenase (NOD) reaction that utilizes O(2) and NAD(P)H to convert NO to nitrate, which protects the fungus from various noxious nitrogen compounds. Therefore, plays a central role in the inducible response to nitrosative stress. Functionally, in the presence of oxygen and NADH, it has NADH oxidase activity, which leads to the generation of superoxide and H(2)O(2). Under anaerobic conditions, it also exhibits nitric oxide reductase and FAD reductase activities. However, all these reactions are much lower than NOD activity. In Saccharomyces cerevisiae (strain ATCC 204508 / S288c) (Baker's yeast), this protein is Flavohemoprotein (YHB1).